The following is a 333-amino-acid chain: MKLGRATLALLLLVPCVVRAVEPISLGLALAGVLTGYISYPRLYCLFAECCGQKRSLSREALQKDLDNKLFGQHLAKRVILNAVSGFLSNPKPKKPLTLSLHGWTGTGKNFASKIIAENIYEGGLNSDYVHLFVATLHFPHASNITLYKDQLQMWIRGNVSACARSIFIFDEMDKMHAGLIDAIKPFLDYYDVVDEVSYQKAIFIFLSNAGAERITDVALDFWRSGKQREEIKLRDMEHALAVSVFNNKNSGFWHSSLIDRNLIDYFVPFLPLEYKHLKMCIRVEMQSRGYEEDEDIINKVAEEMTFFPKEEKVFSDKGCKTVFTKLDYYLDD.

An N-terminal signal peptide occupies residues 1–20; the sequence is MKLGRATLALLLLVPCVVRA. The segment at 92–252 is interaction with SNAPIN; that stretch reads KPKKPLTLSL…VSVFNNKNSG (161 aa). N-linked (GlcNAc...) asparagine glycosylation is found at N144 and N159. Residues 252 to 333 form an interaction with KLC1 region; it reads GFWHSSLIDR…FTKLDYYLDD (82 aa). Residues 313–333 form an interaction with SYNE3 region; that stretch reads KVFSDKGCKTVFTKLDYYLDD.

This sequence belongs to the ClpA/ClpB family. Torsin subfamily. In terms of assembly, homohexamer. Interacts with TOR1B; the interaction may be specific of neural tissues. Interacts (ATP-bound) with TOR1AIP1 and TOR1AIP2; the interactions induce ATPase activity. Interacts with KLHL14; preferentially when ATP-free. Interacts with KLC1 (via TPR repeats); the interaction associates TOR1A with the kinesin oligomeric complex. Interacts with COPS4; the interaction associates TOR1A with the CSN complex. Interacts with SNAPIN; the interaction is direct and associates SNAPIN with the CSN complex. Interacts with STON2. Interacts (ATP-bound) with SYNE3 (via KASH domain); the interaction is required for SYNE3 nuclear envelope localization. Interacts with VIM; the interaction associates TOR1A with the cytoskeleton. Interacts with PLEC. Interacts (ATP-bound) with SLC6A3; regulates SLC6A3 transport to the plasma membrane. In terms of processing, N-glycosylated. As to expression, expressed in brain (at protein level).

Its subcellular location is the endoplasmic reticulum lumen. It is found in the nucleus inner membrane. The protein localises to the cell projection. The protein resides in the growth cone. It localises to the cytoplasmic vesicle membrane. Its subcellular location is the cytoplasmic vesicle. It is found in the secretory vesicle. The protein localises to the synaptic vesicle. The catalysed reaction is ATP + H2O = ADP + phosphate + H(+). In terms of biological role, protein with chaperone functions important for the control of protein folding, processing, stability and localization as well as for the reduction of misfolded protein aggregates. Involved in the regulation of synaptic vesicle recycling, controls STON2 protein stability in collaboration with the COP9 signalosome complex (CSN). In the nucleus, may link the cytoskeleton with the nuclear envelope, this mechanism seems to be crucial for the control of nuclear polarity, cell movement and, specifically in neurons, nuclear envelope integrity. Participates in the cellular trafficking and may regulate the subcellular location of multipass membrane proteins such as the dopamine transporter SLC6A3, leading to the modulation of dopamine neurotransmission. In the endoplasmic reticulum, plays a role in the quality control of protein folding by increasing clearance of misfolded proteins such as SGCE variants or holding them in an intermediate state for proper refolding. May have a redundant function with TOR1B in non-neural tissues. This is Torsin-1A (Tor1a) from Rattus norvegicus (Rat).